A 46-amino-acid chain; its full sequence is Toxin PhcrTx2 (46 aa).

3 cysteine pairs are disulfide-bonded: C4–C40, C6–C32, and C22–C41.

Belongs to the sea anemone type 3 (BDS) potassium channel toxin family.

It is found in the secreted. The protein resides in the nematocyst. In terms of biological role, neurotoxin that induces paralysis (but not death) to U.thayeri crabs. Partially and reversibly inhibits glutamate-evoked peak currents (IC(50)=4.7 uM) but not voltage-gated potassium channel currents in cultured isolated neurons from the land snail H.aspersa. Weakly inhibits voltage-gated potassium peak currents (IC(50)=6.4 uM) and steady-state currents (IC(50)=8.2 uM) in rat dorsal root ganglion (DRG) neurons. Weakly inhibits voltage-gated sodium currents in rat DRG neurons (IC(50)=0.9 uM). The sequence is that of Toxin PhcrTx2 from Phymanthus crucifer (Red beaded anemone).